Consider the following 376-residue polypeptide: Succinyl-diaminopimelate desuccinylase (376 aa).

His-67 contributes to the Zn(2+) binding site. Residue Asp-69 is part of the active site. Residue Asp-100 coordinates Zn(2+). Glu-134 functions as the Proton acceptor in the catalytic mechanism. Zn(2+) contacts are provided by Glu-135, Glu-163, and His-349.

The protein belongs to the peptidase M20A family. DapE subfamily. As to quaternary structure, homodimer. It depends on Zn(2+) as a cofactor. Co(2+) is required as a cofactor.

It catalyses the reaction N-succinyl-(2S,6S)-2,6-diaminopimelate + H2O = (2S,6S)-2,6-diaminopimelate + succinate. Its pathway is amino-acid biosynthesis; L-lysine biosynthesis via DAP pathway; LL-2,6-diaminopimelate from (S)-tetrahydrodipicolinate (succinylase route): step 3/3. Catalyzes the hydrolysis of N-succinyl-L,L-diaminopimelic acid (SDAP), forming succinate and LL-2,6-diaminopimelate (DAP), an intermediate involved in the bacterial biosynthesis of lysine and meso-diaminopimelic acid, an essential component of bacterial cell walls. This is Succinyl-diaminopimelate desuccinylase from Shewanella sediminis (strain HAW-EB3).